A 635-amino-acid polypeptide reads, in one-letter code: Rab11 family-interacting protein 4 (635 aa).

Residues 49 to 84 form the EF-hand domain; sequence GQGEEVEKLVKCLDPNDLGRINFKDFCRGVFAMKGC. Ca(2+) is bound by residues D62, N64, R68, and D73. The segment at 82-635 is necessary for interaction with RAB11A, subcellular location, homo- or heterooligomerization; the sequence is KGCEELLKDV…HNPSILEIKH (554 aa). Disordered stretches follow at residues 147–176 and 216–258; these read GPQELDMDSPMESSQGPEGSVKGCGEEKEP and EDYG…QTPR. The segment covering 216–225 has biased composition (acidic residues); that stretch reads EDYGEGDDVD. Residues 279–615 are a coiled coil; it reads KINLLNDLEA…EEINFRLRQY (337 aa). The FIP-RBD domain maps to 572–634; the sequence is EAKNLFATQT…DHNPSILEIK (63 aa).

In terms of assembly, homodimer. Forms a complex with Rab11 (RAB11A or RAB11B) and ARF6. Interacts with RAB11A; the interaction is direct. Forms a heterooligomeric complex with RAB11FIP2, RAB11FIP3 and RAB11FIP5. Interacts with ECPAS. Strongly expressed in the developing retina. Expressed predominantly in neural tissues.

The protein resides in the recycling endosome membrane. It is found in the cleavage furrow. The protein localises to the midbody. It localises to the cytoplasmic vesicle. In terms of biological role, acts as a regulator of endocytic traffic by participating in membrane delivery. Required for the abscission step in cytokinesis, possibly by acting as an 'address tag' delivering recycling endosome membranes to the cleavage furrow during late cytokinesis. May play a role in differentiation during retinal development, in a Rab11-independent manner. In Mus musculus (Mouse), this protein is Rab11 family-interacting protein 4 (Rab11fip4).